The sequence spans 588 residues: UDP-N-acetylmuramate--L-alanine ligase (588 aa).

119-125 (GSHGKST) provides a ligand contact to ATP. The span at 344–371 (VPAAAGAAAAPPVRRDPATAAAAATTAP) shows a compositional bias: low complexity. The tract at residues 344–411 (VPAAAGAAAA…APAAGPDHAA (68 aa)) is disordered. Over residues 372 to 381 (IGPPDSPPPT) the composition is skewed to pro residues. Residues 382 to 411 (GIALPRAAPPAVDAPVAATPAPAAGPDHAA) show a composition bias toward low complexity.

It belongs to the MurCDEF family.

The protein localises to the cytoplasm. It carries out the reaction UDP-N-acetyl-alpha-D-muramate + L-alanine + ATP = UDP-N-acetyl-alpha-D-muramoyl-L-alanine + ADP + phosphate + H(+). It functions in the pathway cell wall biogenesis; peptidoglycan biosynthesis. Cell wall formation. The protein is UDP-N-acetylmuramate--L-alanine ligase of Frankia alni (strain DSM 45986 / CECT 9034 / ACN14a).